A 267-amino-acid polypeptide reads, in one-letter code: Levodione reductase (267 aa).

17-42 (LITGGGSGLGRATAVRLAAEGAKLSL) contacts NAD(+). Substrate is bound at residue S152. Residue Y165 is the Proton acceptor of the active site.

This sequence belongs to the short-chain dehydrogenases/reductases (SDR) family.

The enzyme catalyses (4R)-hydroxy-(6R)-2,2,6-trimethylcyclohexanone + NAD(+) = (6R)-2,2,6-trimethyl-1,4-cyclohexanedione + NADH + H(+). With respect to regulation, strongly activated by monovalent cations, such as K(+), Na(+), and NH4(+). Catalyzes the regio- and stereoselective reversible NAD-dependent reduction of (6R)-2,2,6-trimethyl-1,4-cyclohexanedione (levodione) to (4R,6R)-4-hydroxy-2,2,6-trimethylcyclohexanone (actinol). In Leifsonia aquatica (Corynebacterium aquaticum), this protein is Levodione reductase (lvr).